Reading from the N-terminus, the 2034-residue chain is Host cell factor 1 (2034 aa).

Ala2 bears the N-acetylalanine mark. Ser6 carries the phosphoserine modification. Kelch repeat units lie at residues Leu44–Cys89, Arg93–His140, Lys148–Gly194, Lys217–Asn265, and Lys266–Thr313. Residues Lys105, Lys163, and Lys244 each participate in a glycyl lysine isopeptide (Lys-Gly) (interchain with G-Cter in ubiquitin) cross-link. Residue Lys282 forms a Glycyl lysine isopeptide (Lys-Gly) (interchain with G-Cter in SUMO2) linkage. Lys288 is subject to N6-acetyllysine. Lys363 participates in a covalent cross-link: Glycyl lysine isopeptide (Lys-Gly) (interchain with G-Cter in ubiquitin). A Fibronectin type-III 1 domain is found at Pro366 to Gly469. Residues Ala407 to Ala434 form a disordered region. Phosphoserine is present on Ser411. Over residues Thr413–Pro428 the composition is skewed to pro residues. A required for interaction with OGT region spans residues Leu500–Ala550. Omega-N-methylarginine occurs at positions 504 and 524. Phosphoserine is present on residues Ser598, Ser666, and Ser669. Residues Leu610–Leu722 are interaction with SIN3A. Positions Ile750–Thr902 are interaction with ZBTB17. The residue at position 813 (Lys813) is an N6-acetyllysine. The interval Lys813–Thr912 is interaction with GABP2. 3 HCF repeat repeats span residues Thr1010–Ala1035, Val1072–Asn1097, and Gln1101–Ser1126. The stretch at Arg1156–Thr1182 is one HCF repeat 4; degenerate repeat. Ser1204 and Ser1223 each carry phosphoserine. Disordered regions lie at residues Gly1221–Thr1241, Pro1302–Thr1374, Thr1444–Ser1477, and Arg1491–Pro1525. HCF repeat repeat units follow at residues Thr1295–Gly1320 and Gln1323–Asn1348. Positions Thr1308 to Ser1321 are enriched in low complexity. Residues Gln1358–Gly1383 form an HCF repeat 7; degenerate repeat. Residues Gln1423 to Asn1448 form an HCF repeat 8 repeat. Residues Arg1491–Pro1501 show a composition bias toward low complexity. Thr1500 carries the phosphothreonine modification. Pro residues predominate over residues Val1502–Glu1511. 2 positions are modified to phosphoserine: Ser1506 and Ser1516. Residues Ile1693–Leu1723 adopt a coiled-coil conformation. Ser1782 bears the Phosphoserine mark. Fibronectin type-III domains are found at residues Leu1808 to Pro1899 and Phe1901 to Asp2017. Glycyl lysine isopeptide (Lys-Gly) (interchain with G-Cter in ubiquitin) cross-links involve residues Lys1818 and Lys1819. At Ser1849 the chain carries Phosphoserine. Positions Ala2005 to Met2034 are disordered. Lys2016 bears the N6-acetyllysine mark.

As to quaternary structure, composed predominantly of six polypeptides ranging from 110 to 150 kDa and a minor 300 kDa polypeptide. The majority of N- and C-terminal cleavage products remain tightly, albeit non-covalently, associated. Interacts with POU2F1, CREB3, ZBTB17, EGR2, E2F4, CREBZF, SP1, GABP2, Sin3 HDAC complex (SIN3A, HDAC1, HDAC2, SUDS3), SAP30, SIN3B and FHL2. Component of a MLL1 complex, composed of at least the core components KMT2A/MLL1, ASH2L, HCFC1, WDR5 and RBBP5, as well as the facultative components BACC1, CHD8, DPY30, E2F6, HCFC2, HSP70, INO80C, KANSL1, LAS1L, MAX, MCRS1, MEN1, MGA, KAT8, PELP1, PHF20, PRP31, RING2, RUVBL1, RUVBL2, SENP3, TAF1, TAF4, TAF6, TAF7, TAF9 and TEX10. Component of a THAP1/THAP3-HCFC1-OGT complex that is required for the regulation of the transcriptional activity of RRM1. Interacts directly with THAP3 (via its HBM). Interacts (via the Kelch-repeat domain) with THAP1 (via the HBM); the interaction recruits HCHC1 to the RRM1. Interacts with THAP7 and THAP11 (via the HMB). Interacts directly with OGT; the interaction, which requires the HCFC1 cleavage site domain, glycosylates and promotes the proteolytic processing of HCFC1, retains OGT in the nucleus and impacts the expression of herpes simplex virus immediate early viral genes. Component of the SET1 complex, at least composed of the catalytic subunit (SETD1A or SETD1B), WDR5, WDR82, RBBP5, ASH2L, CXXC1, HCFC1 and DPY30. Component of the NSL complex at least composed of MOF/KAT8, KANSL1, KANSL2, KANSL3, MCRS1, PHF20, OGT1/OGT, WDR5 and HCFC1. Component of a complex at least composed of ZNF335, HCFC1, CCAR2, EMSY, MKI67, RBBP5, ASH2L and WDR5; the complex is formed as a result of interactions between components of a nuclear receptor-mediated transcription complex and a histone methylation complex. Within the complex interacts with ZNF335. Interacts with TET2 and TET3. Interacts with HCFC1R1. Interacts with THAP11. Interacts (via Kelch domain) with KMT2E/MLL5 isoform 3 (via HBM motif). Interacts with E2F1. Accessory scaffold component of the polycomb repressive deubiquitinase (PR-DUB) complex, at least composed of BAP1, one of ASXL1, ASXL2 or (probably) ASXL3 and one of MBD5 or MBD6; the PR-DUB core associates with a number of accessory proteins, including FOXK1, FOXK2, KDM1B, HCFC1, YY1 and OGT. Interacts with YY1 (via Gly-rich region); the interaction is direct. Interacts with BAP1 (via HBM-like motif). Proteolytically cleaved at one or several PPCE--THET sites within the HCF repeats. Further cleavage of the primary N- and C-terminal chains results in a 'trimming' and accumulation of the smaller chains. Cleavage is promoted by O-glycosylation. Post-translationally, O-glycosylated. GlcNAcylation by OGT promotes proteolytic processing. In terms of processing, ubiquitinated. Lys-1818 and Lys-1819 are ubiquitinated both via 'Lys-48'- and 'Lys-63'-linked polyubiquitin chains. BAP1 mediated deubiquitination of 'Lys-48'-linked polyubiquitin chains; deubiquitination by BAP1 does not seem to stabilize the protein.

It is found in the cytoplasm. Its subcellular location is the nucleus. Its function is as follows. Transcriptional coregulator. Serves as a scaffold protein, bridging interactions between transcription factors, including THAP11 and ZNF143, and transcriptional coregulators. Involved in control of the cell cycle. Also antagonizes transactivation by ZBTB17 and GABP2; represses ZBTB17 activation of the p15(INK4b) promoter and inhibits its ability to recruit p300. Coactivator for EGR2 and GABP2. Tethers the chromatin modifying Set1/Ash2 histone H3 'Lys-4' methyltransferase (H3K4me) and Sin3 histone deacetylase (HDAC) complexes (involved in the activation and repression of transcription, respectively) together. Component of a THAP1/THAP3-HCFC1-OGT complex that is required for the regulation of the transcriptional activity of RRM1. As part of the NSL complex it may be involved in acetylation of nucleosomal histone H4 on several lysine residues. Recruits KMT2E/MLL5 to E2F1 responsive promoters promoting transcriptional activation and thereby facilitates G1 to S phase transition. Modulates expression of homeobox protein PDX1, perhaps acting in concert with transcription factor E2F1, thereby regulating pancreatic beta-cell growth and glucose-stimulated insulin secretion. May negatively modulate transcriptional activity of FOXO3. In Rattus norvegicus (Rat), this protein is Host cell factor 1.